Here is a 215-residue protein sequence, read N- to C-terminus: HTH-type transcriptional repressor FabR (215 aa).

An HTH tetR-type domain is found at 10 to 70; that stretch reads KTRRSLVEAA…TMVDESGLML (61 aa). Positions 33–52 form a DNA-binding region, H-T-H motif; it reads SLREVAREAGIAPTSFYRHF.

Homodimer.

The protein resides in the cytoplasm. Functionally, represses the transcription of fabB, involved in unsaturated fatty acid (UFA) biosynthesis. By controlling UFA production, FabR directly influences the physical properties of the membrane bilayer. This Shigella boydii serotype 18 (strain CDC 3083-94 / BS512) protein is HTH-type transcriptional repressor FabR.